We begin with the raw amino-acid sequence, 262 residues long: Intercellular adhesion molecule 4 (262 aa).

The signal sequence occupies residues Met-1–Pro-22. The Extracellular portion of the chain corresponds to Gln-23 to Ser-231. Ig-like C2-type domains follow at residues Gly-54–Ala-116 and Gly-138–Asp-209. 3 N-linked (GlcNAc...) asparagine glycosylation sites follow: Asn-60, Asn-84, and Asn-182. Cystine bridges form between Cys-61-Cys-105, Cys-61-Cys-109, Cys-65-Cys-109, and Cys-145-Cys-202. Residues Ile-232–Val-252 form a helical membrane-spanning segment. Residues Tyr-253 to Thr-262 lie on the Cytoplasmic side of the membrane.

It belongs to the immunoglobulin superfamily. ICAM family.

It is found in the cell membrane. It localises to the secreted. In terms of biological role, adhesion molecule that binds to leukocyte adhesion LFA-1 protein LFA-1 (integrin alpha-L/beta-2). ICAM4 is also a ligand for alpha-4/beta-1 and alpha-V integrins. Isoform 2 may modulate binding of membrane-associated ICAM4. The polypeptide is Intercellular adhesion molecule 4 (Icam4) (Mus musculus (Mouse)).